The following is a 310-amino-acid chain: GPN-loop GTPase 2 (310 aa).

Ala2 carries the N-acetylalanine modification. GTP is bound at residue 19-24 (GSGKTT). The Gly-Pro-Asn (GPN)-loop; involved in dimer interface motif lies at 76 to 78 (GPN). 178–181 (SKMD) serves as a coordination point for GTP.

The protein belongs to the GPN-loop GTPase family. In terms of assembly, heterodimers with GPN1 or GPN3. Binds to RNA polymerase II (RNAPII).

Its function is as follows. Small GTPase required for proper localization of RNA polymerase II and III (RNAPII and RNAPIII). May act at an RNAP assembly step prior to nuclear import. The chain is GPN-loop GTPase 2 (GPN2) from Bos taurus (Bovine).